Reading from the N-terminus, the 322-residue chain is Chromoplast-specific carotenoid-associated protein, chromoplastic (322 aa).

The transit peptide at 1–58 directs the protein to the chromoplast; that stretch reads MAFVSQFNQLPCKTLALNPPQPQLTSKPSVFPIASIGATARAAAGKSLISVRPAFKVR. Positions 67–88 are disordered; sequence GEDKDEKYGDDSSVAVAEKEEE.

It belongs to the PAP/fibrillin family. Expressed in corollas. Not detected in fruits, stems, leaves, and roots.

It localises to the plastid. It is found in the chromoplast. May be involved in carotenoid sequestration within chromoplasts. This chain is Chromoplast-specific carotenoid-associated protein, chromoplastic (CHRC), found in Cucumis sativus (Cucumber).